Here is a 440-residue protein sequence, read N- to C-terminus: 23S rRNA (uracil(1939)-C(5))-methyltransferase RlmD (440 aa).

The TRAM domain maps to 11–69 (STLDTKHQPVTIERLDHQGSGLAFLHKKPLFVDGALPGEEVLIQLTENKSKYARGQLIK). Positions 82, 88, 91, and 169 each coordinate [4Fe-4S] cluster. Glutamine 272, phenylalanine 301, asparagine 306, glutamate 322, asparagine 349, and aspartate 370 together coordinate S-adenosyl-L-methionine. Residue cysteine 396 is the Nucleophile of the active site.

The protein belongs to the class I-like SAM-binding methyltransferase superfamily. RNA M5U methyltransferase family. RlmD subfamily.

The enzyme catalyses uridine(1939) in 23S rRNA + S-adenosyl-L-methionine = 5-methyluridine(1939) in 23S rRNA + S-adenosyl-L-homocysteine + H(+). In terms of biological role, catalyzes the formation of 5-methyl-uridine at position 1939 (m5U1939) in 23S rRNA. This Vibrio cholerae serotype O1 (strain ATCC 39541 / Classical Ogawa 395 / O395) protein is 23S rRNA (uracil(1939)-C(5))-methyltransferase RlmD.